We begin with the raw amino-acid sequence, 208 residues long: MYDDLTSKQIEILKFIKRYIDYKGYPPAIREIGDSLNINSTSTVHNNILKLEMKGYLRRDPLKNRALEIIDSVYEEQENEIKKETIDVPIVGKVQAGMPILAIENVEDTFPLPIEYTSQGIVFILKVQGESMIEDGILNGDKIIVRKQNTANNGDIVVALMDESATVKRFYRHSDHIELRPSNSTMYPIIVKDVEILGKVIGLYRTIY.

The H-T-H motif DNA-binding region spans 29 to 49 (IREIGDSLNINSTSTVHNNIL). Residues Ser-131 and Lys-168 each act as for autocatalytic cleavage activity in the active site.

The protein belongs to the peptidase S24 family. Homodimer.

It catalyses the reaction Hydrolysis of Ala-|-Gly bond in repressor LexA.. Its function is as follows. Represses a number of genes involved in the response to DNA damage (SOS response), including recA and lexA. In the presence of single-stranded DNA, RecA interacts with LexA causing an autocatalytic cleavage which disrupts the DNA-binding part of LexA, leading to derepression of the SOS regulon and eventually DNA repair. The sequence is that of LexA repressor from Finegoldia magna (strain ATCC 29328 / DSM 20472 / WAL 2508) (Peptostreptococcus magnus).